A 498-amino-acid chain; its full sequence is Calcitonin receptor (498 aa).

An N-terminal signal peptide occupies residues 1 to 29 (MRFTLTRWCLTLFIFLNRPLPVLPDSADG). Topologically, residues 30–147 (AHTPTLEPEP…FTPDKLQNAY (118 aa)) are extracellular. Disulfide bonds link Cys56–Cys82, Cys73–Cys113, and Cys96–Cys135. 3 N-linked (GlcNAc...) asparagine glycosylation sites follow: Asn74, Asn126, and Asn131. The chain crosses the membrane as a helical span at residues 148-170 (ILYYLAIVGHSLSILTLLISLGI). Topologically, residues 171–198 (FMFLRYFNLLAPFNALLYPTRSISCQRV) are cytoplasmic. A helical transmembrane segment spans residues 199 to 219 (TLHKNMFLTYVLNSIIIIVHL). Residues 220–236 (VVIVPNGELVKRDPPIC) lie on the Extracellular side of the membrane. Cys236 and Cys306 are joined by a disulfide. Residues 237 to 259 (KVLHFFHQYMMSCNYFWMLCEGV) form a helical membrane-spanning segment. At 260-276 (YLHTLIVVSVFAEGQRL) the chain is on the cytoplasmic side. Residues 277–297 (WWYHVLGWGFPLIPTTAHAIT) form a helical membrane-spanning segment. The Extracellular portion of the chain corresponds to 298 to 313 (RAVLFNDNCWLSVDTN). Residues 314–337 (LLYIIHGPVMAALVVNFFFLLNIL) form a helical membrane-spanning segment. The Cytoplasmic portion of the chain corresponds to 338-357 (RVLVKKLKESQEAESHMYLK). A helical transmembrane segment spans residues 358–376 (AVRATLILVPLLGVQFVVL). The Extracellular segment spans residues 377-384 (PWRPSTPL). A helical membrane pass occupies residues 385-411 (LGKIYDYVVHSLIHFQGFFVAIIYCFC). Over 412-498 (NHEVQGALKR…MEVLEQETSA (87 aa)) the chain is Cytoplasmic.

The protein belongs to the G-protein coupled receptor 2 family. Heterodimer of CALCR and RAMP1, RAMP2 or RAMP3; the receptor complexes function as AMYR1, AMYR2 and AMYR3 receptors, respectively, and respond to amylin/IAPP, calcitonin/CT and CGRP1 ligands. Interacts with GPRASP2.

The protein resides in the cell membrane. Its function is as follows. G protein-coupled receptor activated by ligand peptides amylin (IAPP), calcitonin (CT/CALCA) and calcitonin gene-related peptide type 1 (CGRP1/CALCA). CALCR interacts with receptor-activity-modifying proteins RAMP1, 2 and 3 to form receptor complexes AMYR1, 2 and 3, respectively. IAPP, CT and CGRP1 activate CALCR and AMYRs with distinct modes of receptor activation resulting in specific phenotypes. Ligand binding causes a conformation change that triggers signaling via guanine nucleotide-binding proteins (G proteins) and modulates the activity of downstream effectors. Activates cAMP-dependent pathway. This is Calcitonin receptor from Sus scrofa (Pig).